Consider the following 96-residue polypeptide: MLFHVRMDVNIPDDMPVEVADEIKAREKAYSQALQKSGKWPHIWRLVGEYANYSIFDVESNAELHGILTGLPLFSYMKIEVTPLCRHPSSIRDDES.

It belongs to the muconolactone Delta-isomerase family. As to quaternary structure, homodecamer.

It catalyses the reaction (S)-muconolactone = (4,5-dihydro-5-oxofuran-2-yl)-acetate. Its pathway is aromatic compound metabolism; beta-ketoadipate pathway; 5-oxo-4,5-dihydro-2-furylacetate from catechol: step 3/3. This chain is Muconolactone Delta-isomerase 1 (catC1), found in Acinetobacter lwoffii.